Reading from the N-terminus, the 215-residue chain is Cytochrome b6 (215 aa).

Residues 32–52 traverse the membrane as a helical segment; it reads IFYCLGGITLTCFIIQVATGF. Cysteine 35 provides a ligand contact to heme c. Histidine 86 and histidine 100 together coordinate heme b. The next 3 membrane-spanning stretches (helical) occupy residues 90-110, 116-136, and 186-206; these read ASMM…TGGF, LTWV…VTGY, and LHTF…FLMI. Heme b-binding residues include histidine 187 and histidine 202.

It belongs to the cytochrome b family. PetB subfamily. The 4 large subunits of the cytochrome b6-f complex are cytochrome b6, subunit IV (17 kDa polypeptide, PetD), cytochrome f and the Rieske protein, while the 4 small subunits are PetG, PetL, PetM and PetN. The complex functions as a dimer. Requires heme b as cofactor. The cofactor is heme c.

The protein localises to the plastid. Its subcellular location is the chloroplast thylakoid membrane. Its function is as follows. Component of the cytochrome b6-f complex, which mediates electron transfer between photosystem II (PSII) and photosystem I (PSI), cyclic electron flow around PSI, and state transitions. In Zygnema circumcarinatum (Green alga), this protein is Cytochrome b6.